The primary structure comprises 597 residues: Elongation factor 4 (597 aa).

The 183-residue stretch at 2–184 folds into the tr-type G domain; sequence KNIRNFSIIA…SIVEHLPAPE (183 aa). GTP-binding positions include 14–19 and 131–134; these read DHGKST and NKID.

The protein belongs to the TRAFAC class translation factor GTPase superfamily. Classic translation factor GTPase family. LepA subfamily.

Its subcellular location is the cell inner membrane. The catalysed reaction is GTP + H2O = GDP + phosphate + H(+). In terms of biological role, required for accurate and efficient protein synthesis under certain stress conditions. May act as a fidelity factor of the translation reaction, by catalyzing a one-codon backward translocation of tRNAs on improperly translocated ribosomes. Back-translocation proceeds from a post-translocation (POST) complex to a pre-translocation (PRE) complex, thus giving elongation factor G a second chance to translocate the tRNAs correctly. Binds to ribosomes in a GTP-dependent manner. This is Elongation factor 4 from Desulfotalea psychrophila (strain LSv54 / DSM 12343).